The following is a 2005-amino-acid chain: Sodium channel protein type 2 subunit alpha (2005 aa).

Residues 1–129 (MAQSVLVPPG…KLAIKILVHS (129 aa)) are Cytoplasmic-facing. Residue serine 4 is modified to Phosphoserine. A disordered region spans residues 28–61 (RIAEEKAKRPKQERKDEDDENGPKPNSDLEAGKS). Lysine 38 is covalently cross-linked (Glycyl lysine isopeptide (Lys-Gly) (interchain with G-Cter in SUMO1)). The stretch at 111 to 456 (ILTPFNPIRK…QQMLEQLKKQ (346 aa)) is one I repeat. A helical transmembrane segment spans residues 130-148 (LFNMLIMCTILTNCVFMTM). The Extracellular portion of the chain corresponds to 149–155 (SNPPDWT). Residues 156–176 (KNVEYTFTGIYTFESLIKILA) form a helical membrane-spanning segment. Topologically, residues 177–190 (RGFCLEDFTFLRDP) are cytoplasmic. Residues 191-208 (WNWLDFTVITFAYVTEFV) form a helical membrane-spanning segment. Topologically, residues 209–214 (DLGNVS) are extracellular. Asparagine 212 carries N-linked (GlcNAc...) asparagine glycosylation. Residues 215–231 (ALRTFRVLRALKTISVI) traverse the membrane as a helical segment. Residues 232–250 (PGLKTIVGALIQSVKKLSD) lie on the Cytoplasmic side of the membrane. Residues 251–270 (VMILTVFCLSVFALIGLQLF) traverse the membrane as a helical segment. Over 271–369 (MGNLRNKCLQ…PNYGYTSFDT (99 aa)) the chain is Extracellular. Cysteine 278 and cysteine 338 are disulfide-bonded. 6 N-linked (GlcNAc...) asparagine glycosylation sites follow: asparagine 285, asparagine 291, asparagine 297, asparagine 303, asparagine 308, and asparagine 340. Positions 370 to 394 (FSWAFLSLFRLMTQDFWENLYQLTL) form an intramembrane region, pore-forming. Over 395-401 (RAAGKTY) the chain is Extracellular. The helical transmembrane segment at 402–422 (MIFFVLVIFLGSFYLINLILA) threads the bilayer. At 423–759 (VVAMAYEEQN…HLVNLVVMDP (337 aa)) the chain is on the cytoplasmic side. A phosphoserine mark is found at serine 468, serine 471, serine 484, serine 526, serine 528, serine 531, serine 553, serine 554, serine 558, serine 573, serine 576, serine 589, serine 610, serine 623, serine 686, serine 687, and serine 721. The segment at 494–529 (SSKSEKELKNRRKKKKQKEQSGEEEKNDRVRKSESE) is disordered. Over residues 511-529 (KEQSGEEEKNDRVRKSESE) the composition is skewed to basic and acidic residues. Residues 590 to 610 (ENDFADDEHSTFEDNDSRRDS) are disordered. Residues 596-610 (DEHSTFEDNDSRRDS) show a composition bias toward basic and acidic residues. One copy of the II repeat lies at 741–1013 (CCKPWLKVKH…QIAVGRMQKG (273 aa)). Residues 760–778 (FVDLAITICIVLNTLFMAM) traverse the membrane as a helical segment. Residues 779-789 (EHYPMTEQFSS) lie on the Extracellular side of the membrane. A helical membrane pass occupies residues 790 to 809 (VLSVGNLVFTGIFTAEMFLK). Residues 810–823 (IIAMDPYYYFQEGW) are Cytoplasmic-facing. The helical transmembrane segment at 824-843 (NIFDGFIVSLSLMELGLANV) threads the bilayer. Residues 844–845 (EG) are Extracellular-facing. Residues 846-863 (LSVLRSFRLLRVFKLAKS) traverse the membrane as a helical segment. Topologically, residues 864–879 (WPTLNMLIKIIGNSVG) are cytoplasmic. The helical transmembrane segment at 880–898 (ALGNLTLVLAIIVFIFAVV) threads the bilayer. Residues 899–927 (GMQLFGKSYKECVCKISNDCELPRWHMHD) are Extracellular-facing. Residues cysteine 912 and cysteine 918 are joined by a disulfide bond. A binds SCN2B region spans residues 917–918 (DC). The segment at residues 928–948 (FFHSFLIVFRVLCGEWIETMW) is an intramembrane region (pore-forming). Topologically, residues 949–961 (DCMEVAGQTMCLT) are extracellular. A disulfide bridge links cysteine 950 with cysteine 959. A helical transmembrane segment spans residues 962–982 (VFMMVMVIGNLVVLNLFLALL). Residues 983–1209 (LSSFSSDNLA…TCYKIVEHNW (227 aa)) are Cytoplasmic-facing. The segment at 1120–1165 (EEFSSESDMEESKEKLNATSSSEGSTVDIGAPAEGEQPEVEPEESL) is disordered. The span at 1155 to 1165 (EQPEVEPEESL) shows a compositional bias: acidic residues. One copy of the III repeat lies at 1190–1504 (KGKLWWNLRK…KKYYNAMKKL (315 aa)). The helical transmembrane segment at 1210–1227 (FETFIVFMILLSSGALAF) threads the bilayer. Residues 1228 to 1240 (EDIYIEQRKTIKT) are Extracellular-facing. The helical transmembrane segment at 1241 to 1259 (MLEYADKVFTYIFILEMLL) threads the bilayer. Over 1260–1273 (KWVAYGFQVYFTNA) the chain is Cytoplasmic. Residues 1274–1292 (WCWLDFLIVDVSLVSLTAN) form a helical membrane-spanning segment. At 1293-1300 (ALGYSELG) the chain is on the extracellular side. The chain crosses the membrane as a helical span at residues 1301–1319 (AIKSLRTLRALRPLRALSR). At 1320–1336 (FEGMRVVVNALLGAIPS) the chain is on the cytoplasmic side. The helical transmembrane segment at 1337-1356 (IMNVLLVCLIFWLIFSIMGV) threads the bilayer. The Extracellular segment spans residues 1357–1408 (NLFAGKFYHCINYTTGEMFDVSVVNNYSECKALIESNQTARWKNVKVNFDNV). A disulfide bridge connects residues cysteine 1366 and cysteine 1386. Asparagine 1368, asparagine 1382, and asparagine 1393 each carry an N-linked (GlcNAc...) asparagine glycan. An intramembrane region (pore-forming) is located at residues 1409-1430 (GLGYLSLLQVATFKGWMDIMYA). Residues 1431–1447 (AVDSRNVELQPKYEDNL) are Extracellular-facing. The helical transmembrane segment at 1448-1469 (YMYLYFVIFIIFGSFFTLNLFI) threads the bilayer. The Cytoplasmic portion of the chain corresponds to 1470-1532 (GVIIDNFNQQ…MVFDFVTKQV (63 aa)). Serine 1506 carries the post-translational modification Phosphoserine; by PKC. The IV repeat unit spans residues 1513–1811 (IPRPANKFQG…WEKFDPDATQ (299 aa)). Residues 1533-1550 (FDISIMILICLNMVTMMV) traverse the membrane as a helical segment. The Extracellular segment spans residues 1551–1561 (ETDDQSQEMTN). The helical transmembrane segment at 1562–1580 (ILYWINLVFIVLFTGECVL) threads the bilayer. The Cytoplasmic portion of the chain corresponds to 1581-1592 (KLISLRYYYFTI). The chain crosses the membrane as a helical span at residues 1593–1610 (GWNIFDFVVVILSIVGMF). At 1611–1623 (LAELIEKYFVSPT) the chain is on the extracellular side. The chain crosses the membrane as a helical span at residues 1624 to 1640 (LFRVIRLARIGRILRLI). The Cytoplasmic portion of the chain corresponds to 1641–1659 (KGAKGIRTLLFALMMSLPA). The chain crosses the membrane as a helical span at residues 1660 to 1677 (LFNIGLLLFLVMFIYAIF). The Extracellular portion of the chain corresponds to 1678–1699 (GMSNFAYVKREVGIDDMFNFET). Positions 1700 to 1722 (FGNSMICLFQITTSAGWDGLLAP) form an intramembrane region, pore-forming. Residues 1723-1752 (ILNSGPPDCDPDKDHPGSSVKGDCGNPSVG) are Extracellular-facing. Cysteine 1731 and cysteine 1746 are disulfide-bonded. A helical membrane pass occupies residues 1753 to 1775 (IFFFVSYIIISFLVVVNMYIAVI). Over 1776–2005 (LENFSVATEE…KGKDIRESKK (230 aa)) the chain is Cytoplasmic. One can recognise an IQ domain in the interval 1905–1934 (EEVSAIIIQRAYRRYLLKQKVKKVSSIYKK). Position 1930 is a phosphoserine (serine 1930). The span at 1935–1964 (DKGKECDGTPIKEDTLIDKLNENSTPEKTD) shows a compositional bias: basic and acidic residues. The tract at residues 1935–2005 (DKGKECDGTP…KGKDIRESKK (71 aa)) is disordered. A phosphothreonine mark is found at threonine 1943, threonine 1963, and threonine 1966. Serine 1971 bears the Phosphoserine mark. Residues 1979–2005 (TKPEKEKFEKDKSEKEDKGKDIRESKK) show a composition bias toward basic and acidic residues.

This sequence belongs to the sodium channel (TC 1.A.1.10) family. Nav1.2/SCN2A subfamily. As to quaternary structure, heterooligomer of a large alpha subunit and a smaller beta subunit. Heterooligomer with SCN2B or SCN4B; disulfide-linked. Heterooligomer with SCN1B or SCN3B; non-covalently linked. Interacts with NEDD4L. Interacts with CALM. Interacts with TMEM233. Interacts with the conotoxin GVIIJ. Interacts with the spider beta/delta-theraphotoxin-Pre1a. Interacts with the conotoxin KIIIA. Interacts with the spider protoxin-II. In terms of processing, may be ubiquitinated by NEDD4L; which would promote its endocytosis. Phosphorylation at Ser-1506 by PKC in a highly conserved cytoplasmic loop slows inactivation of the sodium channel and reduces peak sodium currents. Post-translationally, sumoylated at Lys-38. Sumoylation is induced by hypoxia, increases voltage-gated sodium current and mediates the early response to acute hypoxia in neurons. Sumoylated SCN2A is located at the cell membrane.

It localises to the cell membrane. The enzyme catalyses Na(+)(in) = Na(+)(out). Functionally, mediates the voltage-dependent sodium ion permeability of excitable membranes. Assuming opened or closed conformations in response to the voltage difference across the membrane, the protein forms a sodium-selective channel through which Na(+) ions may pass in accordance with their electrochemical gradient. Implicated in the regulation of hippocampal replay occurring within sharp wave ripples (SPW-R) important for memory. In Homo sapiens (Human), this protein is Sodium channel protein type 2 subunit alpha.